A 98-amino-acid chain; its full sequence is MALTKAEMAEHLFETLGINKRVAKEMVESFFEEIRGALESGEQVKLSGFGNFDLRDKNQRPGRNPKTGEDIPISARRVVTFRPGQKLKTRVEAANTGK.

A disordered region spans residues 49-71 (FGNFDLRDKNQRPGRNPKTGEDI).

It belongs to the bacterial histone-like protein family. In terms of assembly, heterodimer of an alpha and a beta chain.

Its function is as follows. This protein is one of the two subunits of integration host factor, a specific DNA-binding protein that functions in genetic recombination as well as in transcriptional and translational control. In Shewanella oneidensis (strain ATCC 700550 / JCM 31522 / CIP 106686 / LMG 19005 / NCIMB 14063 / MR-1), this protein is Integration host factor subunit alpha.